Reading from the N-terminus, the 431-residue chain is Adenylosuccinate synthetase (431 aa).

GTP is bound by residues Gly-12–Lys-18 and Gly-40–Ser-42. Asp-13 (proton acceptor) is an active-site residue. 2 residues coordinate Mg(2+): Asp-13 and Gly-40. Residues Asp-13 to Lys-16 and Asn-38 to His-41 contribute to the IMP site. His-41 serves as the catalytic Proton donor. The tract at residues Gln-114–Gly-133 is disordered. Positions Gln-115–Glu-125 are enriched in basic and acidic residues. IMP contacts are provided by Thr-130, Arg-144, Gln-225, Thr-240, and Arg-304. Position 300-306 (Thr-300–Arg-306) interacts with substrate. GTP is bound by residues Arg-306, Cys-332–Asp-334, and Ser-414–Gly-416.

It belongs to the adenylosuccinate synthetase family. Homodimer. The cofactor is Mg(2+).

It localises to the cytoplasm. The catalysed reaction is IMP + L-aspartate + GTP = N(6)-(1,2-dicarboxyethyl)-AMP + GDP + phosphate + 2 H(+). It functions in the pathway purine metabolism; AMP biosynthesis via de novo pathway; AMP from IMP: step 1/2. Plays an important role in the de novo pathway of purine nucleotide biosynthesis. Catalyzes the first committed step in the biosynthesis of AMP from IMP. The protein is Adenylosuccinate synthetase of Pediococcus pentosaceus (strain ATCC 25745 / CCUG 21536 / LMG 10740 / 183-1w).